We begin with the raw amino-acid sequence, 78 residues long: Conotoxin 5 (78 aa).

The N-terminal stretch at 1 to 22 (MKLTCMMIVTVLFLTAWIFITA) is a signal peptide. A propeptide spanning residues 23–49 (DNSRNGIENLPRMRRHEMKNPKASKLN) is cleaved from the precursor. Disulfide bonds link Cys53–Cys69, Cys60–Cys73, and Cys68–Cys77.

This sequence belongs to the conotoxin O1 superfamily. In terms of tissue distribution, expressed by the venom duct.

Its subcellular location is the secreted. This Conus imperialis (Imperial cone) protein is Conotoxin 5.